The primary structure comprises 404 residues: Probable tRNA sulfurtransferase (404 aa).

The THUMP domain occupies 61 to 166 (EAVSERLKDV…SGYSYIMCDE (106 aa)). Residues 184–185 (LL), 209–210 (HF), arginine 266, glycine 288, and glutamine 297 each bind ATP.

Belongs to the ThiI family.

It is found in the cytoplasm. The enzyme catalyses [ThiI sulfur-carrier protein]-S-sulfanyl-L-cysteine + a uridine in tRNA + 2 reduced [2Fe-2S]-[ferredoxin] + ATP + H(+) = [ThiI sulfur-carrier protein]-L-cysteine + a 4-thiouridine in tRNA + 2 oxidized [2Fe-2S]-[ferredoxin] + AMP + diphosphate. It catalyses the reaction [ThiS sulfur-carrier protein]-C-terminal Gly-Gly-AMP + S-sulfanyl-L-cysteinyl-[cysteine desulfurase] + AH2 = [ThiS sulfur-carrier protein]-C-terminal-Gly-aminoethanethioate + L-cysteinyl-[cysteine desulfurase] + A + AMP + 2 H(+). The protein operates within cofactor biosynthesis; thiamine diphosphate biosynthesis. Functionally, catalyzes the ATP-dependent transfer of a sulfur to tRNA to produce 4-thiouridine in position 8 of tRNAs, which functions as a near-UV photosensor. Also catalyzes the transfer of sulfur to the sulfur carrier protein ThiS, forming ThiS-thiocarboxylate. This is a step in the synthesis of thiazole, in the thiamine biosynthesis pathway. The sulfur is donated as persulfide by IscS. The sequence is that of Probable tRNA sulfurtransferase from Bacillus cereus (strain B4264).